Here is a 208-residue protein sequence, read N- to C-terminus: Dephospho-CoA kinase (208 aa).

A DPCK domain is found at 3 to 208 (EIGLTGGIGS…ALSAAGVTQA (206 aa)). Position 11-16 (11-16 (GSGKTR)) interacts with ATP.

Belongs to the CoaE family.

It localises to the cytoplasm. The enzyme catalyses 3'-dephospho-CoA + ATP = ADP + CoA + H(+). The protein operates within cofactor biosynthesis; coenzyme A biosynthesis; CoA from (R)-pantothenate: step 5/5. Its function is as follows. Catalyzes the phosphorylation of the 3'-hydroxyl group of dephosphocoenzyme A to form coenzyme A. This chain is Dephospho-CoA kinase, found in Cupriavidus pinatubonensis (strain JMP 134 / LMG 1197) (Cupriavidus necator (strain JMP 134)).